The primary structure comprises 167 residues: Thioredoxin M-type, chloroplastic (167 aa).

A chloroplast-targeting transit peptide spans 1–53; it reads MAMETCFRAWALHAPAGSKDRLLVGNLVLPSKRALAPLSVGRVATRRPRHVCQ. The 112-residue stretch at 54–165 folds into the Thioredoxin domain; sequence SKNAVDEVVV…LTTLIDKYIG (112 aa). The cysteines at positions 89 and 92 are disulfide-linked.

Belongs to the thioredoxin family. Plant M-type subfamily. In terms of assembly, forms a complex with heterodimeric ferredoxin-thioredoxin reductase (FTR) and ferredoxin.

Its subcellular location is the plastid. It localises to the chloroplast. In terms of biological role, participates in various redox reactions through the reversible oxidation of the active center dithiol to a disulfide. The M form is known to activate NADP-malate dehydrogenase. The chain is Thioredoxin M-type, chloroplastic (TRM1) from Zea mays (Maize).